We begin with the raw amino-acid sequence, 378 residues long: Protein RecA (378 aa).

An ATP-binding site is contributed by glycine 79–threonine 86.

The protein belongs to the RecA family.

The protein localises to the cytoplasm. Can catalyze the hydrolysis of ATP in the presence of single-stranded DNA, the ATP-dependent uptake of single-stranded DNA by duplex DNA, and the ATP-dependent hybridization of homologous single-stranded DNAs. It interacts with LexA causing its activation and leading to its autocatalytic cleavage. The polypeptide is Protein RecA (Streptococcus pyogenes serotype M12 (strain MGAS2096)).